Reading from the N-terminus, the 465-residue chain is UDP-glucose:undecaprenyl-phosphate glucose-1-phosphate transferase (465 aa).

The next 5 helical transmembrane spans lie at 23–43 (FSDI…NDYF), 46–66 (LHYV…GGIT), 82–102 (ILIL…VTLF), 105–125 (FDLT…GFVV), and 280–300 (IIVS…IATA).

This sequence belongs to the bacterial sugar transferase family.

It localises to the cell inner membrane. It catalyses the reaction di-trans,octa-cis-undecaprenyl phosphate + UDP-alpha-D-glucose = alpha-D-glucosyl di-trans,octa-cis-undecaprenyl diphosphate + UMP. Its pathway is capsule biogenesis; capsule polysaccharide biosynthesis. Functionally, is likely the initiating enzyme for the K2 capsular polysaccharide synthesis. Catalyzes the transfer of the glucose-1-phosphate moiety from UDP-Glc onto the carrier lipid undecaprenyl phosphate (C55-P), forming a phosphoanhydride bond yielding to glucosyl-pyrophosphoryl-undecaprenol (Glc-PP-C55). The sequence is that of UDP-glucose:undecaprenyl-phosphate glucose-1-phosphate transferase from Klebsiella pneumoniae.